The following is a 104-amino-acid chain: ATP-dependent Clp protease adapter protein ClpS (104 aa).

Belongs to the ClpS family. As to quaternary structure, binds to the N-terminal domain of the chaperone ClpA.

In terms of biological role, involved in the modulation of the specificity of the ClpAP-mediated ATP-dependent protein degradation. This Oleidesulfovibrio alaskensis (strain ATCC BAA-1058 / DSM 17464 / G20) (Desulfovibrio alaskensis) protein is ATP-dependent Clp protease adapter protein ClpS.